We begin with the raw amino-acid sequence, 526 residues long: mRNA export factor ICP27 homolog (526 aa).

Residues C239, H344, C346, and C351 each coordinate Zn(2+). A CHC2-type zinc finger spans residues 239-351 (CVFNDNGHGD…NNHQCDDIGC (113 aa)).

The protein belongs to the HHV-1 ICP27 protein family.

The protein resides in the virion tegument. It is found in the virion. It localises to the host nucleus. The protein localises to the host cytoplasm. Functionally, immediate early (EI) protein that plays many roles during productive infection including regulation of viral gene expression and nuclear export of intronless viral RNAs. The polypeptide is mRNA export factor ICP27 homolog (Human herpesvirus 7 (strain JI) (HHV-7)).